A 208-amino-acid chain; its full sequence is Protein-L-isoaspartate O-methyltransferase (208 aa).

Ser59 is a catalytic residue.

It belongs to the methyltransferase superfamily. L-isoaspartyl/D-aspartyl protein methyltransferase family.

The protein localises to the cytoplasm. The enzyme catalyses [protein]-L-isoaspartate + S-adenosyl-L-methionine = [protein]-L-isoaspartate alpha-methyl ester + S-adenosyl-L-homocysteine. Catalyzes the methyl esterification of L-isoaspartyl residues in peptides and proteins that result from spontaneous decomposition of normal L-aspartyl and L-asparaginyl residues. It plays a role in the repair and/or degradation of damaged proteins. The chain is Protein-L-isoaspartate O-methyltransferase from Sodalis glossinidius (strain morsitans).